A 163-amino-acid chain; its full sequence is UPF0478 protein SAB1599c (163 aa).

A helical transmembrane segment spans residues I7–L27.

This sequence belongs to the UPF0478 family.

The protein resides in the cell membrane. The sequence is that of UPF0478 protein SAB1599c from Staphylococcus aureus (strain bovine RF122 / ET3-1).